Consider the following 181-residue polypeptide: Cell division protein SepF (181 aa).

The span at 18–27 (EDYLDDDDYD) shows a compositional bias: acidic residues. Positions 18–42 (EDYLDDDDYDDGRAVGHDDRRAMHE) are disordered. The segment covering 28–42 (DGRAVGHDDRRAMHE) has biased composition (basic and acidic residues).

It belongs to the SepF family. As to quaternary structure, homodimer. Interacts with FtsZ.

It localises to the cytoplasm. Functionally, cell division protein that is part of the divisome complex and is recruited early to the Z-ring. Probably stimulates Z-ring formation, perhaps through the cross-linking of FtsZ protofilaments. Its function overlaps with FtsA. The sequence is that of Cell division protein SepF from Frankia alni (strain DSM 45986 / CECT 9034 / ACN14a).